A 62-amino-acid chain; its full sequence is Protein DsrB (62 aa).

This sequence belongs to the DsrB family.

The protein is Protein DsrB of Shigella flexneri serotype 5b (strain 8401).